Here is a 557-residue protein sequence, read N- to C-terminus: TBCC domain-containing protein 1 (557 aa).

Residues 290-435 (TTKRAKIACN…LEDHMARTGL (146 aa)) form the C-CAP/cofactor C-like domain.

Belongs to the TBCC family.

It localises to the cytoplasm. It is found in the cytoskeleton. Its subcellular location is the microtubule organizing center. The protein resides in the centrosome. The protein localises to the spindle pole. Its function is as follows. Plays a role in the regulation of centrosome and Golgi apparatus positioning, with consequences on cell shape and cell migration. This Homo sapiens (Human) protein is TBCC domain-containing protein 1 (TBCCD1).